Consider the following 277-residue polypeptide: Transcription antiterminator LicT (277 aa).

PRD domains follow at residues Asp-65–Pro-170 and Asn-171–Ala-277.

It belongs to the transcriptional antiterminator BglG family. Post-translationally, phosphorylated.

Mediates positive regulation of the glucanase operon (licST) by functioning as an antiterminator factor of transcription. Prevents termination at terminator lic-t. In Bacillus subtilis (strain 168), this protein is Transcription antiterminator LicT (licT).